The sequence spans 489 residues: Blue-light-activated histidine kinase (489 aa).

One can recognise a PAS domain in the interval 19–93; the sequence is ATDPFRAAVE…AIKSAIAAEK (75 aa). An S-4a-FMN cysteine modification is found at C69. 2 consecutive PAC domains span residues 93-147 and 232-281; these read KPID…ELEK and YSIE…NKAL. Positions 259–341 are HWE histidine kinase domain; it reads NPLVLGIVQD…LLKENWAGAT (83 aa). At H288 the chain carries Phosphohistidine; by autocatalysis.

In terms of processing, FMN binds covalently to cysteine after exposure to blue light and this bond is spontaneously broken in the dark.

It catalyses the reaction ATP + protein L-histidine = ADP + protein N-phospho-L-histidine.. Its function is as follows. Photosensitive kinase that is involved in increased bacterial virulence upon exposure to light. Once ejected from an infected animal host, sunlight acts as an environmental signal that increases the virulence of the bacterium, preparing it for infection of the next host. This photoreceptor protein is directly related to the bacterium's survival and replication within host macrophages, as it is required for optimal replication of bacteria inside macrophages. This Brucella abortus (strain 2308) protein is Blue-light-activated histidine kinase.